We begin with the raw amino-acid sequence, 139 residues long: ATP synthase epsilon chain (139 aa).

The protein belongs to the ATPase epsilon chain family. As to quaternary structure, F-type ATPases have 2 components, CF(1) - the catalytic core - and CF(0) - the membrane proton channel. CF(1) has five subunits: alpha(3), beta(3), gamma(1), delta(1), epsilon(1). CF(0) has three main subunits: a, b and c.

The protein resides in the cell inner membrane. Its function is as follows. Produces ATP from ADP in the presence of a proton gradient across the membrane. The protein is ATP synthase epsilon chain of Salmonella arizonae (strain ATCC BAA-731 / CDC346-86 / RSK2980).